The sequence spans 140 residues: Alpha-lactalbumin (140 aa).

Positions 1–19 (MMSLLSLLLLGIALPATQA) are cleaved as a signal peptide. Positions 20 to 140 (IDYRKCQASQ…CIEDLDQWRC (121 aa)) constitute a C-type lysozyme domain. 4 cysteine pairs are disulfide-bonded: C25/C140, C47/C131, C80/C96, and C92/C110. N63 is a glycosylation site (N-linked (GlcNAc...) asparagine). Ca(2+) contacts are provided by K98, D101, D103, D106, and D107.

It belongs to the glycosyl hydrolase 22 family. As to quaternary structure, lactose synthase (LS) is a heterodimer of a catalytic component, beta1,4-galactosyltransferase (beta4Gal-T1) and a regulatory component, alpha-lactalbumin (LA). In terms of tissue distribution, mammary gland specific. Secreted in milk.

The protein localises to the secreted. Its function is as follows. Regulatory subunit of lactose synthase, changes the substrate specificity of galactosyltransferase in the mammary gland making glucose a good acceptor substrate for this enzyme. This enables LS to synthesize lactose, the major carbohydrate component of milk. In other tissues, galactosyltransferase transfers galactose onto the N-acetylglucosamine of the oligosaccharide chains in glycoproteins. This Notamacropus eugenii (Tammar wallaby) protein is Alpha-lactalbumin (LALBA).